The primary structure comprises 602 residues: Elongation factor 4 (602 aa).

Residues 7–189 form the tr-type G domain; that stretch reads KKIRNFSIIA…SIVKNVPSPK (183 aa). GTP is bound by residues 19 to 24 and 136 to 139; these read DHGKST and NKID.

Belongs to the TRAFAC class translation factor GTPase superfamily. Classic translation factor GTPase family. LepA subfamily.

The protein localises to the cell membrane. The catalysed reaction is GTP + H2O = GDP + phosphate + H(+). Its function is as follows. Required for accurate and efficient protein synthesis under certain stress conditions. May act as a fidelity factor of the translation reaction, by catalyzing a one-codon backward translocation of tRNAs on improperly translocated ribosomes. Back-translocation proceeds from a post-translocation (POST) complex to a pre-translocation (PRE) complex, thus giving elongation factor G a second chance to translocate the tRNAs correctly. Binds to ribosomes in a GTP-dependent manner. The polypeptide is Elongation factor 4 (Alkaliphilus oremlandii (strain OhILAs) (Clostridium oremlandii (strain OhILAs))).